We begin with the raw amino-acid sequence, 342 residues long: Methylthioribose-1-phosphate isomerase (342 aa).

Substrate is bound by residues 49–51, Arg86, and Gln187; that span reads RGA. Asp228 functions as the Proton donor in the catalytic mechanism. Residue 238-239 participates in substrate binding; it reads NK.

It belongs to the eIF-2B alpha/beta/delta subunits family. MtnA subfamily.

The enzyme catalyses 5-(methylsulfanyl)-alpha-D-ribose 1-phosphate = 5-(methylsulfanyl)-D-ribulose 1-phosphate. Its pathway is amino-acid biosynthesis; L-methionine biosynthesis via salvage pathway; L-methionine from S-methyl-5-thio-alpha-D-ribose 1-phosphate: step 1/6. Its function is as follows. Catalyzes the interconversion of methylthioribose-1-phosphate (MTR-1-P) into methylthioribulose-1-phosphate (MTRu-1-P). In Citrobacter koseri (strain ATCC BAA-895 / CDC 4225-83 / SGSC4696), this protein is Methylthioribose-1-phosphate isomerase.